An 835-amino-acid chain; its full sequence is Protein translocase subunit SecA (835 aa).

ATP contacts are provided by residues glutamine 85, 103-107 (GEGKT), and aspartate 492. Residues 788–807 (VQGEAVHPSSDGEEAKKKPV) are disordered. Residues cysteine 819, cysteine 821, cysteine 830, and cysteine 831 each contribute to the Zn(2+) site.

The protein belongs to the SecA family. In terms of assembly, monomer and homodimer. Part of the essential Sec protein translocation apparatus which comprises SecA, SecYEG and auxiliary proteins SecDF. Other proteins may also be involved. It depends on Zn(2+) as a cofactor.

It localises to the cell membrane. Its subcellular location is the cytoplasm. The enzyme catalyses ATP + H2O + cellular proteinSide 1 = ADP + phosphate + cellular proteinSide 2.. In terms of biological role, part of the Sec protein translocase complex. Interacts with the SecYEG preprotein conducting channel. Has a central role in coupling the hydrolysis of ATP to the transfer of proteins into and across the cell membrane, serving as an ATP-driven molecular motor driving the stepwise translocation of polypeptide chains across the membrane. The sequence is that of Protein translocase subunit SecA from Bacillus cereus (strain B4264).